A 257-amino-acid chain; its full sequence is Pyridoxine 5'-phosphate synthase (257 aa).

N12 is a 3-amino-2-oxopropyl phosphate binding site. Residue 14-15 (DH) participates in 1-deoxy-D-xylulose 5-phosphate binding. Residue R23 participates in 3-amino-2-oxopropyl phosphate binding. H48 acts as the Proton acceptor in catalysis. 1-deoxy-D-xylulose 5-phosphate-binding residues include R50 and H55. The active-site Proton acceptor is E75. Residue T105 coordinates 1-deoxy-D-xylulose 5-phosphate. The Proton donor role is filled by H199. 3-amino-2-oxopropyl phosphate is bound by residues G200 and 221–222 (GH).

This sequence belongs to the PNP synthase family. As to quaternary structure, homooctamer; tetramer of dimers.

Its subcellular location is the cytoplasm. It carries out the reaction 3-amino-2-oxopropyl phosphate + 1-deoxy-D-xylulose 5-phosphate = pyridoxine 5'-phosphate + phosphate + 2 H2O + H(+). It participates in cofactor biosynthesis; pyridoxine 5'-phosphate biosynthesis; pyridoxine 5'-phosphate from D-erythrose 4-phosphate: step 5/5. Its function is as follows. Catalyzes the complicated ring closure reaction between the two acyclic compounds 1-deoxy-D-xylulose-5-phosphate (DXP) and 3-amino-2-oxopropyl phosphate (1-amino-acetone-3-phosphate or AAP) to form pyridoxine 5'-phosphate (PNP) and inorganic phosphate. The protein is Pyridoxine 5'-phosphate synthase of Xanthobacter autotrophicus (strain ATCC BAA-1158 / Py2).